The sequence spans 373 residues: Unsaturated rhamnogalacturonyl hydrolase YteR (373 aa).

Residues 40-41 (HY), aspartate 88, and 132-136 (HKDGY) contribute to the substrate site. Aspartate 143 functions as the Proton donor in the catalytic mechanism. Substrate-binding positions include 213 to 217 (RSIGW) and 333 to 334 (TS).

Belongs to the glycosyl hydrolase 105 family. As to quaternary structure, monomer.

The protein localises to the cytoplasm. It catalyses the reaction 2-O-(4-deoxy-beta-L-threo-hex-4-enopyranuronosyl)-alpha-L-rhamnose + H2O = 5-dehydro-4-deoxy-D-glucuronate + L-rhamnopyranose. In terms of biological role, catalyzes the hydrolysis of unsaturated rhamnogalacturonan disaccharide to yield unsaturated D-galacturonic acid and L-rhamnose. It cannot act on unsaturated glucuronyl hydrolase (UGL) substrates containing unsaturated D-glucuronic acid at the non-reducing terminus, although the active pockets of YesR and UGL are very similar. This is Unsaturated rhamnogalacturonyl hydrolase YteR (yteR) from Bacillus subtilis (strain 168).